Consider the following 224-residue polypeptide: Uridylate kinase (224 aa).

8–12 (KITGK) serves as a coordination point for ATP. Glycine 43 serves as a coordination point for UMP. The ATP site is built by glycine 44 and arginine 48. Residues aspartate 66 and 114-120 (LIPGQST) each bind UMP. Serine 140, tyrosine 146, and aspartate 149 together coordinate ATP.

The protein belongs to the UMP kinase family. In terms of assembly, homohexamer.

The protein resides in the cytoplasm. The catalysed reaction is UMP + ATP = UDP + ADP. Its pathway is pyrimidine metabolism; CTP biosynthesis via de novo pathway; UDP from UMP (UMPK route): step 1/1. Inhibited by UTP. Functionally, catalyzes the reversible phosphorylation of UMP to UDP. This Staphylothermus marinus (strain ATCC 43588 / DSM 3639 / JCM 9404 / F1) protein is Uridylate kinase.